The following is a 138-amino-acid chain: Ribulose bisphosphate carboxylase small subunit (138 aa).

This sequence belongs to the RuBisCO small chain family. In terms of assembly, heterohexadecamer of 8 large and 8 small subunits.

It localises to the plastid. Its subcellular location is the chloroplast. Functionally, ruBisCO catalyzes two reactions: the carboxylation of D-ribulose 1,5-bisphosphate, the primary event in carbon dioxide fixation, as well as the oxidative fragmentation of the pentose substrate in the photorespiration process. Both reactions occur simultaneously and in competition at the same active site. Although the small subunit is not catalytic it is essential for maximal activity. The chain is Ribulose bisphosphate carboxylase small subunit from Porphyridium aerugineum (Red microalga).